We begin with the raw amino-acid sequence, 1188 residues long: Carboxylic acid reductase (1188 aa).

Residues His-315, Ser-408, 429 to 430 (DG), Thr-434, Asp-507, 519 to 522 (YVDR), Lys-528, and Lys-629 contribute to the AMP site. The Carrier domain maps to 665–743 (AGERPVIETV…SVAAHIEKER (79 aa)). The residue at position 702 (Ser-702) is an O-(pantetheine 4'-phosphoryl)serine. Residues 801 to 804 (NGWL), Arg-828, Arg-838, 868 to 869 (DF), 894 to 896 (SGA), Ser-934, Tyr-970, Lys-974, and Ser-997 each bind NADP(+).

The protein belongs to the ATP-dependent AMP-binding enzyme family. Carboxylic acid reductase subfamily. It depends on pantetheine 4'-phosphate as a cofactor.

It catalyses the reaction a carboxylate + ATP + NADPH + H(+) = an aldehyde + AMP + diphosphate + NADP(+). Functionally, catalyzes the ATP- and NADPH-dependent reduction of carboxylic acids to the corresponding aldehydes. Catalyzes the reduction of a very wide range of carboxylic acids, including benzoic acids, heterocyclic, phenylacetic, phenylpropanoic and fatty acid substrates. This Segniliparus rugosus (strain ATCC BAA-974 / DSM 45345 / CCUG 50838 / CIP 108380 / JCM 13579 / CDC 945) protein is Carboxylic acid reductase.